We begin with the raw amino-acid sequence, 353 residues long: tRNA N6-adenosine threonylcarbamoyltransferase (353 aa).

Positions 109 and 113 each coordinate Fe cation. Substrate is bound by residues 136 to 140, aspartate 169, glycine 182, aspartate 186, and asparagine 284; that span reads TVSGG. Aspartate 312 is a binding site for Fe cation.

It belongs to the KAE1 / TsaD family. Requires Fe(2+) as cofactor.

The protein localises to the cytoplasm. It catalyses the reaction L-threonylcarbamoyladenylate + adenosine(37) in tRNA = N(6)-L-threonylcarbamoyladenosine(37) in tRNA + AMP + H(+). Required for the formation of a threonylcarbamoyl group on adenosine at position 37 (t(6)A37) in tRNAs that read codons beginning with adenine. Is involved in the transfer of the threonylcarbamoyl moiety of threonylcarbamoyl-AMP (TC-AMP) to the N6 group of A37, together with TsaE and TsaB. TsaD likely plays a direct catalytic role in this reaction. This is tRNA N6-adenosine threonylcarbamoyltransferase from Chlorobium phaeobacteroides (strain DSM 266 / SMG 266 / 2430).